Here is a 61-residue protein sequence, read N- to C-terminus: MPIVNVKLLEGRSDEQLKNLVTEVTNAVEKTTGANKEAIQIVIEEMKASHYGVAGVRKSDQ.

Proline 2 acts as the Proton acceptor; via imino nitrogen in catalysis.

Belongs to the 4-oxalocrotonate tautomerase family.

The polypeptide is Probable tautomerase SSP1389 (Staphylococcus saprophyticus subsp. saprophyticus (strain ATCC 15305 / DSM 20229 / NCIMB 8711 / NCTC 7292 / S-41)).